A 327-amino-acid chain; its full sequence is MAVYTDVAADELADFLSRYDIGDLLSYKGIAEGVENSNFLLHTSRGYFILTLYEKRVARDDLPFFLSLMTHLADSGINCPQPVADREGRTLATLAGRPAAIISFLDGVWPRKPSVVHCAGVGQALAKMHLAGRDFAMKRANALSVAGWRPLFAAAEARADEVQPGLRDFLAAELSYLESGVWPSDLPQGLIHADLFPDNVFFIGDDVSGIIDFTFACNDLLAYDVAICLNAWCFEADHAFNVTKARALLSAYTRERPLDAAEQAALPLLARGAALRFLLTRLVDWLNVPEGALVKPKDPMEYVRKLRFQQNVAGIRDYGVEIAGAVA.

Belongs to the pseudomonas-type ThrB family.

The enzyme catalyses L-homoserine + ATP = O-phospho-L-homoserine + ADP + H(+). Its pathway is amino-acid biosynthesis; L-threonine biosynthesis; L-threonine from L-aspartate: step 4/5. The sequence is that of Homoserine kinase from Rhodopseudomonas palustris (strain TIE-1).